Reading from the N-terminus, the 230-residue chain is Large ribosomal subunit protein uL1 (230 aa).

Belongs to the universal ribosomal protein uL1 family. As to quaternary structure, part of the 50S ribosomal subunit.

In terms of biological role, binds directly to 23S rRNA. The L1 stalk is quite mobile in the ribosome, and is involved in E site tRNA release. Its function is as follows. Protein L1 is also a translational repressor protein, it controls the translation of the L11 operon by binding to its mRNA. This is Large ribosomal subunit protein uL1 from Bacillus anthracis (strain A0248).